Reading from the N-terminus, the 582-residue chain is Probable DNA ligase (582 aa).

E243 is a binding site for ATP. Residue K245 is the N6-AMP-lysine intermediate of the active site. ATP contacts are provided by R250, R265, E295, F335, R410, and K416.

It belongs to the ATP-dependent DNA ligase family. Mg(2+) serves as cofactor.

The enzyme catalyses ATP + (deoxyribonucleotide)n-3'-hydroxyl + 5'-phospho-(deoxyribonucleotide)m = (deoxyribonucleotide)n+m + AMP + diphosphate.. Functionally, DNA ligase that seals nicks in double-stranded DNA during DNA replication, DNA recombination and DNA repair. This Dictyoglomus turgidum (strain DSM 6724 / Z-1310) protein is Probable DNA ligase.